The sequence spans 978 residues: Calsyntenin-1 (978 aa).

The first 26 residues, 1-26, serve as a signal peptide directing secretion; it reads MTFHKTFGYGCIVLICFELLFAGVET. Topologically, residues 27–876 are extracellular; the sequence is SSENDDEYLT…SFIHKAEGSH (850 aa). Cadherin domains are found at residues 37 to 143 and 144 to 249; these read QKEI…APTF and LEPS…MPER. N-linked (GlcNAc...) asparagine glycosylation occurs at asparagine 53. N-linked (GlcNAc...) asparagine glycosylation is found at asparagine 304, asparagine 486, asparagine 608, and asparagine 823. The chain crosses the membrane as a helical span at residues 877 to 897; the sequence is VTMLIILVSVFLAVLLCGVSI. The Cytoplasmic segment spans residues 898–978; sequence ARLKNNQKYI…EWDNSNIFQQ (81 aa). Residues 937-958 form a disordered region; it reads ADVTSDASSESENSESEDEEAL. Residues 948–957 show a composition bias toward acidic residues; it reads ENSESEDEEA.

Belongs to the calsyntenin family.

It is found in the postsynaptic cell membrane. Postsynaptic adhesion molecule that binds to presynaptic neurexins to mediate both excitatory and inhibitory synapse formation. Promotes synapse development by acting as a cell adhesion molecule at the postsynaptic membrane, which associates with neurexin-alpha at the presynaptic membrane. The polypeptide is Calsyntenin-1 (Cals) (Drosophila melanogaster (Fruit fly)).